Reading from the N-terminus, the 450-residue chain is Paired box protein Pax-8 (450 aa).

The paired DNA-binding region spans 9 to 135; the sequence is GHGGLNQLGG…SSINRIIRTK (127 aa). The interval 12–68 is PAI subdomain; it reads GLNQLGGAFVNGRPLPEVVRQRIVDLAHQGVRPCDISRQLRVSHGCVSKILGRYYET. Residues 87 to 135 are RED subdomain; the sequence is KVVEKIGDYKRQNPTMFAWEIRDRLLAEGVCDNDTVPSVSSINRIIRTK. Polar residues predominate over residues 159–182; sequence LIPSSAVTPPESPQSDSLGSTYSI. Residues 159–222 are disordered; that stretch reads LIPSSAVTPP…QSSSSGPRKH (64 aa). Ser303 carries the post-translational modification Phosphoserine.

As to quaternary structure, interacts with WWTR1. In terms of tissue distribution, expressed in the excretory system, thyroid gland and Wilms tumors.

The protein resides in the nucleus. Functionally, transcription factor for the thyroid-specific expression of the genes exclusively expressed in the thyroid cell type, maintaining the functional differentiation of such cells. In Homo sapiens (Human), this protein is Paired box protein Pax-8 (PAX8).